The sequence spans 316 residues: HPr kinase/phosphorylase (316 aa).

Residues His-146 and Lys-167 contribute to the active site. Residue 161-168 participates in ATP binding; sequence GESGLGKS. Residue Ser-168 participates in Mg(2+) binding. Asp-185 serves as the catalytic Proton acceptor; for phosphorylation activity. Proton donor; for dephosphorylation activity. Residues 209–218 are important for the catalytic mechanism of both phosphorylation and dephosphorylation; it reads LEVRGIGLLD. A Mg(2+)-binding site is contributed by Glu-210. Arg-252 is an active-site residue. Residues 273 to 278 form an important for the catalytic mechanism of dephosphorylation region; the sequence is QVEAGR.

It belongs to the HPrK/P family. Homohexamer. Requires Mg(2+) as cofactor.

It catalyses the reaction [HPr protein]-L-serine + ATP = [HPr protein]-O-phospho-L-serine + ADP + H(+). The enzyme catalyses [HPr protein]-O-phospho-L-serine + phosphate + H(+) = [HPr protein]-L-serine + diphosphate. Functionally, catalyzes the ATP- as well as the pyrophosphate-dependent phosphorylation of a specific serine residue in HPr, a phosphocarrier protein of the phosphoenolpyruvate-dependent sugar phosphotransferase system (PTS). HprK/P also catalyzes the pyrophosphate-producing, inorganic phosphate-dependent dephosphorylation (phosphorolysis) of seryl-phosphorylated HPr (P-Ser-HPr). The sequence is that of HPr kinase/phosphorylase from Polaromonas naphthalenivorans (strain CJ2).